The following is a 145-amino-acid chain: S-adenosylmethionine synthase 2 (145 aa).

Residues 6–7, A23, K27, and K31 each bind ATP; that span reads RK. K31 provides a ligand contact to L-methionine.

The protein belongs to the AdoMet synthase family. As to quaternary structure, homotetramer. The cofactor is Mn(2+). It depends on Mg(2+) as a cofactor. Co(2+) serves as cofactor. K(+) is required as a cofactor. As to expression, mainly in floral buds and roots.

It localises to the cytoplasm. It catalyses the reaction L-methionine + ATP + H2O = S-adenosyl-L-methionine + phosphate + diphosphate. The protein operates within amino-acid biosynthesis; S-adenosyl-L-methionine biosynthesis; S-adenosyl-L-methionine from L-methionine: step 1/1. Functionally, catalyzes the formation of S-adenosylmethionine from methionine and ATP. The reaction comprises two steps that are both catalyzed by the same enzyme: formation of S-adenosylmethionine (AdoMet) and triphosphate, and subsequent hydrolysis of the triphosphate. This Petroselinum crispum (Parsley) protein is S-adenosylmethionine synthase 2 (SMS-2).